Here is a 1895-residue protein sequence, read N- to C-terminus: Probable WRKY transcription factor 19 (1895 aa).

A disordered region spans residues 1–85 (MSEKEELPLT…SGSGLSQQLN (85 aa)). Polar residues predominate over residues 10–22 (TLTSIGAATATSD). The segment covering 28-39 (GSSGEGISSSSS) has biased composition (low complexity). Residues 46-62 (MQNSPTGLMISQSSSMC) are compositionally biased toward polar residues. A compositionally biased stretch (low complexity) spans 75-85 (SSGSGLSQQLN). One can recognise a PAH domain in the interval 291-371 (RPLTIDGGGN…LGFNTYLSKE (81 aa)). Positions 408 to 417 (ANMQPQTEYP) are enriched in polar residues. Disordered regions lie at residues 408–442 (ANMQ…SSLL), 517–538 (YKDR…TYLS), and 580–620 (EASD…ADAS). Residues 418–427 (SSSAVQSFSS) are compositionally biased toward low complexity. Positions 428–442 (GQPQIPTSAPDSSLL) are enriched in polar residues. The WRKY 1 DNA-binding region spans 462 to 526 (NVDKQVNDGY…YKDRHNHEPP (65 aa)). Residues 635–700 (SEVDNLDDGY…SLCRRGISVY (66 aa)) constitute a DNA-binding region (WRKY 2). The 143-residue stretch at 666–808 (KDYDVVIRYG…EIVRDALKVL (143 aa)) folds into the TIR domain. Residues 800–1087 (IVRDALKVLC…LDGCGFSAHV (288 aa)) form the NB-ARC domain. 844 to 851 (GTVGIGKT) contacts ATP. LRR repeat units lie at residues 1206–1227 (KLRL…FNPE), 1228–1249 (NLVE…KKAR), 1259–1281 (KLKK…SSAT), 1282–1304 (NLEH…ISYL), 1306–1328 (KLVF…VDLE), 1329–1351 (SLEV…SPNV), 1352–1371 (KELY…IKNL), 1373–1395 (LLEK…IYKL), 1397–1419 (HLET…SRRM), and 1421–1442 (CLRF…ISYL). The segment at 1562 to 1583 (ETVAPPSSSSEAREEEVETEET) is disordered. Positions 1626–1877 (WQKGQLLGRG…AAELLNHPFV (252 aa)) constitute a Protein kinase domain. ATP contacts are provided by residues 1632 to 1640 (LGRGSLGSV) and K1654. The active site involves D1758.

It belongs to the disease resistance X-TIR-NB-LRR-X family.

It is found in the nucleus. Transcription factor. Interacts specifically with the W box (5'-(T)TGAC[CT]-3'), a frequently occurring elicitor-responsive cis-acting element. May act also as a disease resistance protein with a serine/threonine-protein kinase activity. The protein is Probable WRKY transcription factor 19 (WRKY19) of Arabidopsis thaliana (Mouse-ear cress).